A 571-amino-acid chain; its full sequence is Protein EARLY STARVATION 1, chloroplastic (571 aa).

Disordered stretches follow at residues 142-162 and 215-254; these read RHSS…KDAG and GSYR…TEHD. A compositionally biased stretch (low complexity) spans 145 to 155; that stretch reads SCSSQSLPQQQ.

It belongs to the ESV1 family.

The protein localises to the plastid. Its subcellular location is the chloroplast stroma. In terms of biological role, binds preferentially to highly ordered alpha-glucans, such as starch and crystalline maltodextrins. Involved in the organization of the starch granule matrix, thus influencing starch turnover by modulating the accessibility of starch polymers to modifying and degrading enzymes. Required for the control of starch degradation in leaves and starch distribution in nonphotosynthetic parts. Promotes gravitropic responses, negative in shoots but positive in roots, by facilitating starch granules (statoliths) formation in hypocotyls and roots columella. In Marchantia polymorpha (Common liverwort), this protein is Protein EARLY STARVATION 1, chloroplastic.